Reading from the N-terminus, the 395-residue chain is Chaperone protein DnaJ 2 (395 aa).

Residues 10-75 (NYYADLGVSS…KKRKEYDELK (66 aa)) form the J domain. The CR-type zinc-finger motif lies at 165–242 (GTTIPVELTG…CHGRGTVRKS (78 aa)). Residues Cys-178, Cys-181, Cys-194, Cys-197, Cys-216, Cys-219, Cys-230, and Cys-233 each contribute to the Zn(2+) site. 4 CXXCXGXG motif repeats span residues 178-185 (CNTCHGSG), 194-201 (CGTCDGTG), 216-223 (CATCGGTG), and 230-237 (CDNCHGRG).

The protein belongs to the DnaJ family. Homodimer. Zn(2+) is required as a cofactor.

Its subcellular location is the cytoplasm. In terms of biological role, participates actively in the response to hyperosmotic and heat shock by preventing the aggregation of stress-denatured proteins and by disaggregating proteins, also in an autonomous, DnaK-independent fashion. Unfolded proteins bind initially to DnaJ; upon interaction with the DnaJ-bound protein, DnaK hydrolyzes its bound ATP, resulting in the formation of a stable complex. GrpE releases ADP from DnaK; ATP binding to DnaK triggers the release of the substrate protein, thus completing the reaction cycle. Several rounds of ATP-dependent interactions between DnaJ, DnaK and GrpE are required for fully efficient folding. Also involved, together with DnaK and GrpE, in the DNA replication of plasmids through activation of initiation proteins. This is Chaperone protein DnaJ 2 from Corynebacterium glutamicum (strain ATCC 13032 / DSM 20300 / JCM 1318 / BCRC 11384 / CCUG 27702 / LMG 3730 / NBRC 12168 / NCIMB 10025 / NRRL B-2784 / 534).